Here is a 546-residue protein sequence, read N- to C-terminus: Glucose-6-phosphate isomerase (546 aa).

Glu353 functions as the Proton donor in the catalytic mechanism. Catalysis depends on residues His384 and Lys512.

This sequence belongs to the GPI family.

Its subcellular location is the cytoplasm. The enzyme catalyses alpha-D-glucose 6-phosphate = beta-D-fructose 6-phosphate. It participates in carbohydrate biosynthesis; gluconeogenesis. The protein operates within carbohydrate degradation; glycolysis; D-glyceraldehyde 3-phosphate and glycerone phosphate from D-glucose: step 2/4. Catalyzes the reversible isomerization of glucose-6-phosphate to fructose-6-phosphate. This chain is Glucose-6-phosphate isomerase, found in Actinobacillus pleuropneumoniae serotype 5b (strain L20).